Here is a 130-residue protein sequence, read N- to C-terminus: Small ribosomal subunit protein uS9 (130 aa).

Positions 105 to 130 are disordered; the sequence is TRDPRMKERKKYGLHKARKAPQYSKR. Over residues 111 to 130 the composition is skewed to basic residues; sequence KERKKYGLHKARKAPQYSKR.

It belongs to the universal ribosomal protein uS9 family.

The sequence is that of Small ribosomal subunit protein uS9 from Syntrophomonas wolfei subsp. wolfei (strain DSM 2245B / Goettingen).